We begin with the raw amino-acid sequence, 844 residues long: Neuronal PAS domain-containing protein 4B (844 aa).

The tract at residues 61-74 (KMYRSTKGASKARR) is basic motif; degenerate. A bHLH domain is found at 61 to 114 (KMYRSTKGASKARRDQINAEIRSLKELLPISDADKARLSYLHIMSLACIYTRKS). Residues 75–114 (DQINAEIRSLKELLPISDADKARLSYLHIMSLACIYTRKS) are helix-loop-helix motif. PAS domains are found at residues 132-190 (SLPE…PVDH) and 294-343 (DMRI…LHNG). Over residues 410-422 (SRQSSDPLSSPDQ) the composition is skewed to polar residues. 4 disordered regions span residues 410–432 (SRQS…SGLS), 444–479 (GRSS…GGGH), 702–725 (PLPN…SYSQ), and 757–784 (TEGG…EAPA). Over residues 704-716 (PNLPSPSPVPPSP) the composition is skewed to pro residues.

Efficient DNA binding requires dimerization with another bHLH protein.

Its subcellular location is the nucleus. Functionally, transcription factor expressed in neurons of the brain that regulates the excitatory-inhibitory balance within neural circuits and is required for contextual memory in the hippocampus. Plays a key role in the structural and functional plasticity of neurons. Acts as an early-response transcription factor in both excitatory and inhibitory neurons, where it induces distinct but overlapping sets of late-response genes in these two types of neurons, allowing the synapses that form on inhibitory and excitatory neurons to be modified by neuronal activity in a manner specific to their function within a circuit, thereby facilitating appropriate circuit responses to sensory experience. The chain is Neuronal PAS domain-containing protein 4B (npas4b) from Danio rerio (Zebrafish).